We begin with the raw amino-acid sequence, 625 residues long: Isocitrate dehydrogenase kinase/phosphatase (625 aa).

Residues A325–M331 and K346 contribute to the ATP site. Residue D381 is part of the active site. Positions R596–P625 are disordered.

Belongs to the AceK family.

Its subcellular location is the cytoplasm. The catalysed reaction is L-seryl-[isocitrate dehydrogenase] + ATP = O-phospho-L-seryl-[isocitrate dehydrogenase] + ADP + H(+). Functionally, bifunctional enzyme which can phosphorylate or dephosphorylate isocitrate dehydrogenase (IDH) on a specific serine residue. This is a regulatory mechanism which enables bacteria to bypass the Krebs cycle via the glyoxylate shunt in response to the source of carbon. When bacteria are grown on glucose, IDH is fully active and unphosphorylated, but when grown on acetate or ethanol, the activity of IDH declines drastically concomitant with its phosphorylation. The polypeptide is Isocitrate dehydrogenase kinase/phosphatase (Polaromonas sp. (strain JS666 / ATCC BAA-500)).